The following is a 175-amino-acid chain: Snake venom metalloproteinase BpMP-1 (175 aa).

Residues tyrosine 1 to lysine 175 enclose the Peptidase M12B domain. Positions 3 and 74 each coordinate Ca(2+). Intrachain disulfides connect cysteine 98-cysteine 171, cysteine 131-cysteine 155, and cysteine 133-cysteine 138. Histidine 117 contributes to the Zn(2+) binding site. Glutamate 118 is an active-site residue. Zn(2+) is bound by residues histidine 121 and histidine 127. Positions 171 and 174 each coordinate Ca(2+).

Belongs to the venom metalloproteinase (M12B) family. P-I subfamily. In terms of assembly, monomer. Requires Zn(2+) as cofactor. Expressed by the venom gland.

It is found in the secreted. With respect to regulation, inhibited by EDTA, 1,10-phenanthroline and beta-mercaptoethanol. Not inhibited by the serine protease inhibitors aprotinin and benzamidin. In terms of biological role, non-hemorrhagic snake venom zinc metalloprotease that hydrolyzes the Aalpha-chain of fibrinogen, more slowly the Bbeta-chain and shows no effect on the gamma chain. Has no coagulant activity on bovine plasma and fibrinogen. The sequence is that of Snake venom metalloproteinase BpMP-1 from Bothrops pauloensis (Neuwied's lancehead).